The following is a 375-amino-acid chain: MVSLYLENGLFLQAQSFGASGTQVGELVFNTSMSGYQEVISDPSYKGQFVVFSMPEIGVVGANPKDDESFFSCAGVLARHYNEFFSNSRADSSLSTYLKKRGVLGISGVDTRSLIKTLRHHGCLMMIASTIEHDRNKLEEVLKNAPKISHSPLVSSVSTPKIITHQRATFDFNTLDYKPFDEKIPHKIIAVLDFGAKGNILNELQNVGLKALIYPHHTKANELIKAYEKKEISGIFLSNGPGDPLSLQQEIGEIKRLINAKIPMFGICLGHQLLSIAQGYPTYKLKFGHHGSNHPVKNLETNAVEITAQNHNYCVPEEIEEIATITHRNLFDNTIEGVRYKNAPIISVQHHPESSPGPKESHYIFKEFVGLLEGF.

A CPSase region spans residues 1–184 (MVSLYLENGL…LDYKPFDEKI (184 aa)). Positions 44, 240, and 242 each coordinate L-glutamine. The Glutamine amidotransferase type-1 domain maps to 188–375 (IIAVLDFGAK…KEFVGLLEGF (188 aa)). The active-site Nucleophile is the Cys268. Positions 269, 272, 310, and 313 each coordinate L-glutamine. Active-site residues include His351 and Glu353.

Belongs to the CarA family. As to quaternary structure, composed of two chains; the small (or glutamine) chain promotes the hydrolysis of glutamine to ammonia, which is used by the large (or ammonia) chain to synthesize carbamoyl phosphate. Tetramer of heterodimers (alpha,beta)4.

It carries out the reaction hydrogencarbonate + L-glutamine + 2 ATP + H2O = carbamoyl phosphate + L-glutamate + 2 ADP + phosphate + 2 H(+). The catalysed reaction is L-glutamine + H2O = L-glutamate + NH4(+). It functions in the pathway amino-acid biosynthesis; L-arginine biosynthesis; carbamoyl phosphate from bicarbonate: step 1/1. It participates in pyrimidine metabolism; UMP biosynthesis via de novo pathway; (S)-dihydroorotate from bicarbonate: step 1/3. Its function is as follows. Small subunit of the glutamine-dependent carbamoyl phosphate synthetase (CPSase). CPSase catalyzes the formation of carbamoyl phosphate from the ammonia moiety of glutamine, carbonate, and phosphate donated by ATP, constituting the first step of 2 biosynthetic pathways, one leading to arginine and/or urea and the other to pyrimidine nucleotides. The small subunit (glutamine amidotransferase) binds and cleaves glutamine to supply the large subunit with the substrate ammonia. The protein is Carbamoyl phosphate synthase small chain of Helicobacter pylori (strain J99 / ATCC 700824) (Campylobacter pylori J99).